The chain runs to 79 residues: MCSYSSKANTNARITDSSIWSPQPGQHISIQTYRELNPAPTSSPTSTRTEIQLNGENSRSTADLPGEANRLLMIHMPRR.

2 disordered regions span residues 1 to 24 (MCSY…SPQP) and 36 to 79 (LNPA…MPRR). The segment covering 38–47 (PAPTSSPTST) has biased composition (low complexity). Residues 48-61 (RTEIQLNGENSRST) are compositionally biased toward polar residues.

This sequence belongs to the geminiviridae protein AC4/C4 family.

Functionally, pathogenicity determinant. May act as a suppressor of RNA-mediated gene silencing, also known as post-transcriptional gene silencing (PTGS), a mechanism of plant viral defense that limits the accumulation of viral RNAs. The chain is Protein AC4 from Abutilon (Upland cotton).